The chain runs to 195 residues: Peptide methionine sulfoxide reductase MsrA 2 (195 aa).

Cysteine 18 is a catalytic residue.

Belongs to the MsrA Met sulfoxide reductase family.

It carries out the reaction L-methionyl-[protein] + [thioredoxin]-disulfide + H2O = L-methionyl-(S)-S-oxide-[protein] + [thioredoxin]-dithiol. The catalysed reaction is [thioredoxin]-disulfide + L-methionine + H2O = L-methionine (S)-S-oxide + [thioredoxin]-dithiol. Its function is as follows. Has an important function as a repair enzyme for proteins that have been inactivated by oxidation. Catalyzes the reversible oxidation-reduction of methionine sulfoxide in proteins to methionine. The chain is Peptide methionine sulfoxide reductase MsrA 2 (msrA2) from Mesorhizobium japonicum (strain LMG 29417 / CECT 9101 / MAFF 303099) (Mesorhizobium loti (strain MAFF 303099)).